Reading from the N-terminus, the 229-residue chain is Transmembrane emp24 domain-containing protein 5 (229 aa).

The signal sequence occupies residues 1 to 27 (MGVRMWLPFPMLLLSALPATLLSGAAG). Residues 28–196 (FTPSLDSDFT…IQESNFDRVN (169 aa)) are Lumenal-facing. Residues 45-126 (KECFYQPMPL…EKVIFFELIL (82 aa)) form the GOLD domain. Residues 197–217 (FWSVVNLMVMVVVSAIQVYTL) form a helical membrane-spanning segment. Topologically, residues 218 to 229 (KSLFEDKRKSRT) are cytoplasmic.

This sequence belongs to the EMP24/GP25L family. As to quaternary structure, interacts with TMED9 and TMED10.

Its subcellular location is the endoplasmic reticulum membrane. It is found in the golgi apparatus. It localises to the cis-Golgi network membrane. The protein resides in the endoplasmic reticulum-Golgi intermediate compartment membrane. Functionally, potential role in vesicular protein trafficking, mainly in the early secretory pathway. Required for the maintenance of the Golgi apparatus; involved in protein exchange between Golgi stacks during assembly. Probably not required for COPI-vesicle-mediated retrograde transport. The polypeptide is Transmembrane emp24 domain-containing protein 5 (Tmed5) (Rattus norvegicus (Rat)).